Reading from the N-terminus, the 58-residue chain is Large ribosomal subunit protein uL30 (58 aa).

This sequence belongs to the universal ribosomal protein uL30 family. As to quaternary structure, part of the 50S ribosomal subunit.

In Zymomonas mobilis subsp. mobilis (strain ATCC 31821 / ZM4 / CP4), this protein is Large ribosomal subunit protein uL30.